Reading from the N-terminus, the 282-residue chain is Heterogeneous nuclear ribonucleoprotein C (282 aa).

In terms of domain architecture, RRM spans 17–88 (SRVFIGNLNT…QVLDINLAAE (72 aa)). 2 disordered regions span residues 131–177 (APPP…RLKG) and 208–282 (QSKQ…EEDS). The short motif at 141-147 (PSKRQRV) is the Nuclear localization signal element. Residues 161-172 (SKSGQRGGSSKS) show a composition bias toward low complexity. The stretch at 177 to 217 (GDDLQAIKKELSQIKQRVDSLLENLERIERDQSKQDTKLDD) forms a coiled coil. Basic and acidic residues-rich tracts occupy residues 208–217 (QSKQDTKLDD) and 224–235 (LKKEETGVKLIE). Composition is skewed to acidic residues over residues 236–257 (ETGD…EDTL) and 265–282 (KETE…EEDS).

This sequence belongs to the RRM HNRPC family. RALY subfamily. In terms of assembly, tetramer.

Its subcellular location is the nucleus. Its function is as follows. Binds pre-mRNA and nucleates the assembly of 40S hnRNP particles. Interacts with poly-U tracts in the 3'-UTR or 5'-UTR of mRNA and modulates the stability and the level of translation of bound mRNA molecules. Single HNRNPC tetramers bind 230-240 nucleotides. Trimers of HNRNPC tetramers bind 700 nucleotides. May play a role in the early steps of spliceosome assembly and pre-mRNA splicing. N6-methyladenosine (m6A) has been shown to alter the local structure in mRNAs and long non-coding RNAs (lncRNAs) via a mechanism named 'm(6)A-switch', facilitating binding of HNRNPC, leading to regulation of mRNA splicing. This chain is Heterogeneous nuclear ribonucleoprotein C (hnrnpc), found in Xenopus laevis (African clawed frog).